The chain runs to 166 residues: NAD(P)H-quinone oxidoreductase subunit I, chloroplastic (166 aa).

2 consecutive 4Fe-4S ferredoxin-type domains span residues 55 to 84 and 95 to 124; these read GRIH…VDWK and LNYS…MTEE. Residues Cys64, Cys67, Cys70, Cys74, Cys104, Cys107, Cys110, and Cys114 each contribute to the [4Fe-4S] cluster site.

Belongs to the complex I 23 kDa subunit family. As to quaternary structure, NDH is composed of at least 16 different subunits, 5 of which are encoded in the nucleus. It depends on [4Fe-4S] cluster as a cofactor.

The protein resides in the plastid. Its subcellular location is the chloroplast thylakoid membrane. It carries out the reaction a plastoquinone + NADH + (n+1) H(+)(in) = a plastoquinol + NAD(+) + n H(+)(out). It catalyses the reaction a plastoquinone + NADPH + (n+1) H(+)(in) = a plastoquinol + NADP(+) + n H(+)(out). In terms of biological role, NDH shuttles electrons from NAD(P)H:plastoquinone, via FMN and iron-sulfur (Fe-S) centers, to quinones in the photosynthetic chain and possibly in a chloroplast respiratory chain. The immediate electron acceptor for the enzyme in this species is believed to be plastoquinone. Couples the redox reaction to proton translocation, and thus conserves the redox energy in a proton gradient. The chain is NAD(P)H-quinone oxidoreductase subunit I, chloroplastic from Aphanactis jamesoniana.